The sequence spans 99 residues: NADH-quinone oxidoreductase subunit K (99 aa).

The next 3 membrane-spanning stretches (helical) occupy residues 3–23 (PINY…GVLL), 28–48 (IVMF…FVTF), and 59–79 (MIAF…LAII).

This sequence belongs to the complex I subunit 4L family. NDH-1 is composed of 14 different subunits. Subunits NuoA, H, J, K, L, M, N constitute the membrane sector of the complex.

The protein localises to the cell membrane. The enzyme catalyses a quinone + NADH + 5 H(+)(in) = a quinol + NAD(+) + 4 H(+)(out). Its function is as follows. NDH-1 shuttles electrons from NADH, via FMN and iron-sulfur (Fe-S) centers, to quinones in the respiratory chain. The immediate electron acceptor for the enzyme in this species is believed to be a menaquinone. Couples the redox reaction to proton translocation (for every two electrons transferred, four hydrogen ions are translocated across the cytoplasmic membrane), and thus conserves the redox energy in a proton gradient. In Mycobacterium avium (strain 104), this protein is NADH-quinone oxidoreductase subunit K.